The primary structure comprises 547 residues: Sesterfisheric acid synthase (547 aa).

A helical transmembrane segment spans residues 19–39; that stretch reads IMGCSLGTGLLVSMIIYNYFF. N-linked (GlcNAc...) asparagine glycosylation is found at asparagine 341 and asparagine 404. Cysteine 490 lines the heme pocket.

The protein belongs to the cytochrome P450 family. It depends on heme as a cofactor.

The protein localises to the membrane. It carries out the reaction sesterfisherol + 3 reduced [NADPH--hemoprotein reductase] + 3 O2 = sesterfisherate + 3 oxidized [NADPH--hemoprotein reductase] + 4 H2O + 4 H(+). The protein operates within secondary metabolite biosynthesis; terpenoid biosynthesis. Cytochrome P450 monooxygenase; part of the gene cluster that mediates the biosynthesis of sesterfisheric acid. The bifunctional terpene synthase NfSS converts DMAPP and IPP, and also GGPP, into sesterfisherol. The C-terminal prenyltransferase (PT) domain of NfSS catalyzes formation of GFPP, whereas the N-terminal terpene cyclase (TC) domain catalyzes the cyclization of GFPP to sesterfisherol. The cytochrome P450 monooxygenase NfP450 then catalyzes oxidative modifications of sesterfisherol into sesterfisheric acid. The chain is Sesterfisheric acid synthase from Neosartorya fischeri (strain ATCC 1020 / DSM 3700 / CBS 544.65 / FGSC A1164 / JCM 1740 / NRRL 181 / WB 181) (Aspergillus fischerianus).